Reading from the N-terminus, the 215-residue chain is MANERHYSATDRLLLQADAALRTLLPFSGKPYRPSPAQGEPETQLDAGKARHVAGLMRINHTGEVCAQALYQGQALTARLPRVRGAMEQAANEEIDHLAWCEQRIRELNSRPSLLNPLFYGLSFGIGATAGLISDRISLGFVAATEDQVCKHLDDHLKQLPEEDRKSRAILEQMRIDEQQHATTALEAGGLRFPAPVKFGMTLLSKVMTKSTYRI.

The Fe cation site is built by glutamate 64, glutamate 94, histidine 97, glutamate 146, glutamate 178, and histidine 181.

This sequence belongs to the COQ7 family. Fe cation is required as a cofactor.

The protein resides in the cell membrane. It catalyses the reaction a 5-methoxy-2-methyl-3-(all-trans-polyprenyl)benzene-1,4-diol + AH2 + O2 = a 3-demethylubiquinol + A + H2O. Its pathway is cofactor biosynthesis; ubiquinone biosynthesis. Functionally, catalyzes the hydroxylation of 2-nonaprenyl-3-methyl-6-methoxy-1,4-benzoquinol during ubiquinone biosynthesis. The sequence is that of 3-demethoxyubiquinol 3-hydroxylase from Azotobacter vinelandii (strain DJ / ATCC BAA-1303).